The following is a 206-amino-acid chain: Thymidylate kinase (206 aa).

Position 11–18 (11–18 (GIDGAGKT)) interacts with ATP.

This sequence belongs to the thymidylate kinase family.

The enzyme catalyses dTMP + ATP = dTDP + ADP. In terms of biological role, phosphorylation of dTMP to form dTDP in both de novo and salvage pathways of dTTP synthesis. The sequence is that of Thymidylate kinase from Burkholderia thailandensis (strain ATCC 700388 / DSM 13276 / CCUG 48851 / CIP 106301 / E264).